A 311-amino-acid polypeptide reads, in one-letter code: tRNA dimethylallyltransferase (311 aa).

13–20 (GPTASGKT) contributes to the ATP binding site. 15–20 (TASGKT) lines the substrate pocket. Interaction with substrate tRNA stretches follow at residues 38–41 (DSMQ) and 166–170 (QRVLR).

It belongs to the IPP transferase family. As to quaternary structure, monomer. Mg(2+) serves as cofactor.

It carries out the reaction adenosine(37) in tRNA + dimethylallyl diphosphate = N(6)-dimethylallyladenosine(37) in tRNA + diphosphate. Its function is as follows. Catalyzes the transfer of a dimethylallyl group onto the adenine at position 37 in tRNAs that read codons beginning with uridine, leading to the formation of N6-(dimethylallyl)adenosine (i(6)A). In Staphylococcus aureus (strain bovine RF122 / ET3-1), this protein is tRNA dimethylallyltransferase.